The chain runs to 432 residues: D-amino acid dehydrogenase (432 aa).

An FAD-binding site is contributed by Val-3–Trp-17.

This sequence belongs to the DadA oxidoreductase family. FAD is required as a cofactor.

The enzyme catalyses a D-alpha-amino acid + A + H2O = a 2-oxocarboxylate + AH2 + NH4(+). The protein operates within amino-acid degradation; D-alanine degradation; NH(3) and pyruvate from D-alanine: step 1/1. Functionally, oxidative deamination of D-amino acids. The protein is D-amino acid dehydrogenase of Citrobacter koseri (strain ATCC BAA-895 / CDC 4225-83 / SGSC4696).